We begin with the raw amino-acid sequence, 434 residues long: Ribosomal protein uS12 methylthiotransferase RimO (434 aa).

Residues 9 to 125 form the MTTase N-terminal domain; that stretch reads PAIFLLSLGC…VLAAIGAKYR (117 aa). [4Fe-4S] cluster-binding residues include Cys18, Cys54, Cys88, Cys149, Cys153, and Cys156. One can recognise a Radical SAM core domain in the interval 135–364; sequence LTPPHYAFLK…MELQEGISAS (230 aa). The 68-residue stretch at 367–434 folds into the TRAM domain; the sequence is RKLEGQTLKV…AYELFGRISG (68 aa).

This sequence belongs to the methylthiotransferase family. RimO subfamily. [4Fe-4S] cluster serves as cofactor.

Its subcellular location is the cytoplasm. It carries out the reaction L-aspartate(89)-[ribosomal protein uS12]-hydrogen + (sulfur carrier)-SH + AH2 + 2 S-adenosyl-L-methionine = 3-methylsulfanyl-L-aspartate(89)-[ribosomal protein uS12]-hydrogen + (sulfur carrier)-H + 5'-deoxyadenosine + L-methionine + A + S-adenosyl-L-homocysteine + 2 H(+). In terms of biological role, catalyzes the methylthiolation of an aspartic acid residue of ribosomal protein uS12. In Chlorobaculum tepidum (strain ATCC 49652 / DSM 12025 / NBRC 103806 / TLS) (Chlorobium tepidum), this protein is Ribosomal protein uS12 methylthiotransferase RimO.